The following is a 611-amino-acid chain: Broad-specificity linear acyl-CoA dehydrogenase FadE5 (611 aa).

FAD contacts are provided by residues Met-162–Thr-165, Ser-171, and Thr-198. Ser-171 contributes to the a 2,3-saturated acyl-CoA binding site. A 2,3-saturated acyl-CoA contacts are provided by residues Thr-224–Lys-225 and Arg-301. Position 326 (Arg-326) interacts with FAD. Lys-338 is an a 2,3-saturated acyl-CoA binding site. Position 420–424 (Gln-420–Gly-424) interacts with FAD. Position 447 (Glu-447) interacts with a 2,3-saturated acyl-CoA. The active-site Proton acceptor is the Glu-447. FAD is bound at residue Thr-449. Residues Asp-456 and Arg-460 to Lys-461 contribute to the a 2,3-saturated acyl-CoA site.

The protein belongs to the acyl-CoA dehydrogenase family. Homodimer. The cofactor is FAD.

The catalysed reaction is a long-chain 2,3-saturated fatty acyl-CoA + oxidized [electron-transfer flavoprotein] + H(+) = a long-chain (2E)-enoyl-CoA + reduced [electron-transfer flavoprotein]. It carries out the reaction a medium-chain 2,3-saturated fatty acyl-CoA + oxidized [electron-transfer flavoprotein] + H(+) = a medium-chain (2E)-enoyl-CoA + reduced [electron-transfer flavoprotein]. It catalyses the reaction a short-chain 2,3-saturated fatty acyl-CoA + oxidized [electron-transfer flavoprotein] + H(+) = a short-chain (2E)-enoyl-CoA + reduced [electron-transfer flavoprotein]. The enzyme catalyses octadecanoyl-CoA + oxidized [electron-transfer flavoprotein] + H(+) = (2E)-octadecenoyl-CoA + reduced [electron-transfer flavoprotein]. The catalysed reaction is oxidized [electron-transfer flavoprotein] + hexadecanoyl-CoA + H(+) = (2E)-hexadecenoyl-CoA + reduced [electron-transfer flavoprotein]. It carries out the reaction dodecanoyl-CoA + oxidized [electron-transfer flavoprotein] + H(+) = (2E)-dodecenoyl-CoA + reduced [electron-transfer flavoprotein]. It catalyses the reaction decanoyl-CoA + oxidized [electron-transfer flavoprotein] + H(+) = (2E)-decenoyl-CoA + reduced [electron-transfer flavoprotein]. The enzyme catalyses hexanoyl-CoA + oxidized [electron-transfer flavoprotein] + H(+) = (2E)-hexenoyl-CoA + reduced [electron-transfer flavoprotein]. The catalysed reaction is butanoyl-CoA + oxidized [electron-transfer flavoprotein] + H(+) = (2E)-butenoyl-CoA + reduced [electron-transfer flavoprotein]. Its pathway is lipid metabolism; fatty acid metabolism. In terms of biological role, acyl-CoA dehydrogenase that exhibits broad specificity for linear acyl-CoA substrates, with a preference for long-chain substrates. This is Broad-specificity linear acyl-CoA dehydrogenase FadE5 from Mycobacterium tuberculosis (strain ATCC 25618 / H37Rv).